Reading from the N-terminus, the 1441-residue chain is Protein clueless (1441 aa).

Disordered regions lie at residues methionine 1–threonine 79 and valine 106–serine 131. Positions lysine 8–lysine 22 are enriched in polar residues. Over residues alanine 54–asparagine 63 the composition is skewed to basic residues. Composition is skewed to low complexity over residues lysine 64–threonine 79 and valine 106–serine 126. Residue serine 273 is modified to Phosphoserine. The Clu domain occupies arginine 427–leucine 669. Residues lysine 726–glutamate 753 are compositionally biased toward basic and acidic residues. 2 disordered regions span residues lysine 726–lysine 769 and glutamate 961–threonine 1009. A compositionally biased stretch (basic residues) spans lysine 964–serine 977. The span at lysine 978–threonine 1009 shows a compositional bias: low complexity. TPR repeat units lie at residues alanine 1109 to valine 1142, alanine 1235 to tyrosine 1268, and glycine 1270 to threonine 1303.

The protein belongs to the CLU family.

The protein localises to the cytoplasm. MRNA-binding protein involved in proper cytoplasmic distribution of mitochondria. The protein is Protein clueless of Drosophila willistoni (Fruit fly).